Here is a 230-residue protein sequence, read N- to C-terminus: Ribose-5-phosphate isomerase A (230 aa).

Substrate is bound by residues 31 to 34 (TGST), 88 to 91 (DGSD), and 101 to 104 (KGGG). The active-site Proton acceptor is the Glu-110. Lys-128 is a substrate binding site.

This sequence belongs to the ribose 5-phosphate isomerase family. As to quaternary structure, homodimer.

The enzyme catalyses aldehydo-D-ribose 5-phosphate = D-ribulose 5-phosphate. Its pathway is carbohydrate degradation; pentose phosphate pathway; D-ribose 5-phosphate from D-ribulose 5-phosphate (non-oxidative stage): step 1/1. Its function is as follows. Catalyzes the reversible conversion of ribose-5-phosphate to ribulose 5-phosphate. In Lactobacillus acidophilus (strain ATCC 700396 / NCK56 / N2 / NCFM), this protein is Ribose-5-phosphate isomerase A.